We begin with the raw amino-acid sequence, 138 residues long: Nucleoside diphosphate kinase (138 aa).

The ATP site is built by Lys9, Phe57, Arg85, Thr91, Arg102, and Asn112. Residue His115 is the Pros-phosphohistidine intermediate of the active site.

The protein belongs to the NDK family. In terms of assembly, homotetramer. Mg(2+) serves as cofactor.

The protein resides in the cytoplasm. It carries out the reaction a 2'-deoxyribonucleoside 5'-diphosphate + ATP = a 2'-deoxyribonucleoside 5'-triphosphate + ADP. The enzyme catalyses a ribonucleoside 5'-diphosphate + ATP = a ribonucleoside 5'-triphosphate + ADP. Functionally, major role in the synthesis of nucleoside triphosphates other than ATP. The ATP gamma phosphate is transferred to the NDP beta phosphate via a ping-pong mechanism, using a phosphorylated active-site intermediate. The sequence is that of Nucleoside diphosphate kinase from Exiguobacterium sibiricum (strain DSM 17290 / CCUG 55495 / CIP 109462 / JCM 13490 / 255-15).